The chain runs to 449 residues: MQKYDFDLFVIGAGSGGVRAARIAAGHGAKVAIAEEYRFGGTCVIRGCVPKKLLMYASQYGQGFEDAAGFGWHSAATSHSWTSLIAAKDAEIARLEGVYQRLIENANVEIFKGRAQIAGPNRVTVTGASVSARTILIATGARPVMPPVAGANLMITSDDVFDLPVGPPRIAIIGGGYIACEFAGIFNGLGRHVVQLHRGSQVLRGFDDELREHLGDELKKSGIDLRLGVDVVAVERQRGALSVQLTTGDAMEVDAVMAATGRLPNTWGLGLETVDVGLDQNGAIKVDEYSRTSSPGIYAVGDVTNRLNLTPVAIHEGHAFADTVFGGKALPTEHENVPFAVFSQPQAASVGLSEAQARDRYSNVEIYGSAFRPMRAALSGRDEKALVKLVVNGSNDRVVGAHIVGADAAEIIQGIAVAIKARATKADFDATLGVHPTLAEEFVTLRNRR.

6 residues coordinate FAD: Ser15, Gly16, Glu35, Thr42, Cys43, and Lys51. Residue Ser15 participates in glutathione binding. Cys43 and Cys48 are disulfide-bonded. Position 99 (Tyr99) interacts with glutathione. An FAD-binding site is contributed by Ala115. NADP(+) is bound by residues Gly175, Ile178, Glu181, Arg198, Arg204, and Gly261. Positions 302 and 310 each coordinate FAD. Ala340 contributes to the NADP(+) binding site. An FAD-binding site is contributed by His435. Residue His435 is the Proton acceptor of the active site.

The protein belongs to the class-I pyridine nucleotide-disulfide oxidoreductase family. Homodimer. FAD serves as cofactor.

Its subcellular location is the cytoplasm. It catalyses the reaction 2 glutathione + NADP(+) = glutathione disulfide + NADPH + H(+). Its pathway is xenobiotic degradation; (2,4,5-trichlorophenoxy)acetate degradation. In terms of biological role, catalyzes the reduction of glutathione disulfide (GSSG) to reduced glutathione (GSH). Constitutes the major mechanism to maintain a high GSH:GSSG ratio in the cytosol. This chain is Glutathione reductase (gor), found in Burkholderia cepacia (Pseudomonas cepacia).